Reading from the N-terminus, the 351-residue chain is N-acetyl-gamma-glutamyl-phosphate reductase (351 aa).

Residue Cys154 is part of the active site.

The protein belongs to the NAGSA dehydrogenase family. Type 1 subfamily.

The protein localises to the cytoplasm. The catalysed reaction is N-acetyl-L-glutamate 5-semialdehyde + phosphate + NADP(+) = N-acetyl-L-glutamyl 5-phosphate + NADPH + H(+). It participates in amino-acid biosynthesis; L-arginine biosynthesis; N(2)-acetyl-L-ornithine from L-glutamate: step 3/4. Functionally, catalyzes the NADPH-dependent reduction of N-acetyl-5-glutamyl phosphate to yield N-acetyl-L-glutamate 5-semialdehyde. The chain is N-acetyl-gamma-glutamyl-phosphate reductase from Prochlorococcus marinus subsp. pastoris (strain CCMP1986 / NIES-2087 / MED4).